A 143-amino-acid chain; its full sequence is Putative pre-16S rRNA nuclease (143 aa).

This sequence belongs to the YqgF nuclease family.

The protein resides in the cytoplasm. In terms of biological role, could be a nuclease involved in processing of the 5'-end of pre-16S rRNA. The sequence is that of Putative pre-16S rRNA nuclease from Mycoplasma capricolum subsp. capricolum (strain California kid / ATCC 27343 / NCTC 10154).